The chain runs to 71 residues: Conotoxin Vc6.12 (71 aa).

The first 19 residues, 1 to 19 (MQKLIILLLVAAVLMSTQA), serve as a signal peptide directing secretion. Positions 20–43 (LFQEKRPMKKINFLSKGKTDAEKQ) are excised as a propeptide. 3 disulfide bridges follow: Cys-48/Cys-62, Cys-55/Cys-66, and Cys-61/Cys-70.

Belongs to the conotoxin O2 superfamily. Expressed by the venom duct.

The protein resides in the secreted. In terms of biological role, inhibits voltage-gated ion channels. The protein is Conotoxin Vc6.12 of Conus victoriae (Queen Victoria cone).